The primary structure comprises 244 residues: 5-oxoprolinase subunit A (244 aa).

This sequence belongs to the LamB/PxpA family. As to quaternary structure, forms a complex composed of PxpA, PxpB and PxpC.

It carries out the reaction 5-oxo-L-proline + ATP + 2 H2O = L-glutamate + ADP + phosphate + H(+). Functionally, catalyzes the cleavage of 5-oxoproline to form L-glutamate coupled to the hydrolysis of ATP to ADP and inorganic phosphate. This is 5-oxoprolinase subunit A from Salmonella agona (strain SL483).